The primary structure comprises 329 residues: Homeobox protein ceh-40 (329 aa).

Residues 3–186 (EASKSIMDLL…VIQLKKRYLD (184 aa)) enclose the PBC domain. The interval 10–90 (DLLSEVVKIT…EGVAGPDDSL (81 aa)) is PBC-A. The tract at residues 93–186 (IQEAAGTDQY…VIQLKKRYLD (94 aa)) is PBC-B. The segment at residues 187–249 (ARRKRRNFSK…NKRIRYKKTM (63 aa)) is a DNA-binding region (homeobox; TALE-type). The disordered stretch occupies residues 248-275 (TMAKNEDERRENRKPEDRPPPGAPGAPY). The segment covering 250–266 (AKNEDERRENRKPEDRP) has biased composition (basic and acidic residues).

This sequence belongs to the TALE/PBX homeobox family. In terms of tissue distribution, expressed in head dopaminergic neurons.

It localises to the nucleus. Functionally, plays a role in regulating gene expression in dopaminergic neurons, acting redundantly with homeobox protein ceh-20 in head neurons. May activate dopamine pathway genes in concert with ETS domain-containing protein ast-1, and homeobox proteins ceh-43 and ceh-20. The chain is Homeobox protein ceh-40 (ceh-40) from Caenorhabditis elegans.